The primary structure comprises 447 residues: Methionine aminopeptidase 2 (447 aa).

Positions M1–I86 are disordered. A compositionally biased stretch (basic and acidic residues) spans E8 to E32. The segment covering G43–T60 has biased composition (acidic residues). A compositionally biased stretch (basic residues) spans K71–I86. Residue H198 coordinates substrate. A divalent metal cation is bound by residues D218, D229, and H300. H308 lines the substrate pocket. E333 and E428 together coordinate a divalent metal cation.

It belongs to the peptidase M24A family. Methionine aminopeptidase eukaryotic type 2 subfamily. The cofactor is Co(2+). Zn(2+) serves as cofactor. Requires Mn(2+) as cofactor. It depends on Fe(2+) as a cofactor.

It is found in the cytoplasm. It catalyses the reaction Release of N-terminal amino acids, preferentially methionine, from peptides and arylamides.. Functionally, cotranslationally removes the N-terminal methionine from nascent proteins. The N-terminal methionine is often cleaved when the second residue in the primary sequence is small and uncharged (Met-Ala-, Cys, Gly, Pro, Ser, Thr, or Val). The sequence is that of Methionine aminopeptidase 2 from Candida albicans (strain WO-1) (Yeast).